Consider the following 379-residue polypeptide: Alcohol dehydrogenase class-2 isozyme 1 (379 aa).

Zn(2+) contacts are provided by C47, H69, C99, C102, C105, C113, and C176. NAD(+)-binding positions include 205–210 (GLGGVG), D229, K234, 298–300 (VGV), and R374.

The protein belongs to the zinc-containing alcohol dehydrogenase family. Class-II subfamily. Homodimer. The cofactor is Zn(2+).

Its subcellular location is the cytoplasm. The enzyme catalyses a primary alcohol + NAD(+) = an aldehyde + NADH + H(+). The catalysed reaction is a secondary alcohol + NAD(+) = a ketone + NADH + H(+). This Oryctolagus cuniculus (Rabbit) protein is Alcohol dehydrogenase class-2 isozyme 1 (ADH2-1).